The chain runs to 37 residues: Large ribosomal subunit protein bL36 (37 aa).

This sequence belongs to the bacterial ribosomal protein bL36 family.

This chain is Large ribosomal subunit protein bL36, found in Leptospira interrogans serogroup Icterohaemorrhagiae serovar Lai (strain 56601).